A 23-amino-acid polypeptide reads, in one-letter code: Acidic phospholipase A2 Cvv-E6c (23 aa).

Ca(2+) serves as cofactor. Contains 7 disulfide bonds. Expressed by the venom gland.

The protein localises to the secreted. The catalysed reaction is a 1,2-diacyl-sn-glycero-3-phosphocholine + H2O = a 1-acyl-sn-glycero-3-phosphocholine + a fatty acid + H(+). Its function is as follows. Snake venom phospholipase A2 (PLA2) that significantly inhibits ADP-induced platelet aggregation in platelet-rich plasma of human, rabbit and guinea pig. PLA2 catalyzes the calcium-dependent hydrolysis of the 2-acyl groups in 3-sn-phosphoglycerides. This Crotalus viridis viridis (Prairie rattlesnake) protein is Acidic phospholipase A2 Cvv-E6c.